Consider the following 250-residue polypeptide: Transcriptional activator protein EchR (250 aa).

One can recognise an HTH luxR-type domain in the interval 173 to 238 (KSQEPNIFSQ…HAIRLGVEMN (66 aa)). The H-T-H motif DNA-binding region spans 197–216 (YQEIALILGITTSTVKFHIG).

The protein belongs to the autoinducer-regulated transcriptional regulatory protein family.

Its function is as follows. Functions as a potential ohlL-responsive transcriptional regulator. This chain is Transcriptional activator protein EchR (echR), found in Dickeya chrysanthemi (Pectobacterium chrysanthemi).